The primary structure comprises 136 residues: MTNQWEPTTLNAWGREEAWLRSVVDSHQSFCGCNDPGFHLGLLLHSAGRHLGGPGGPQPPPAPGGPGVGGEGPRRFLPLPGLPANPEEPGHQRPPCPGGPGDAGGAGGVDAETGEGEWRPEDIAELLDGLEDAEKR.

Residues 46–136 (SAGRHLGGPG…LDGLEDAEKR (91 aa)) are disordered. The span at 99–108 (GPGDAGGAGG) shows a compositional bias: gly residues. Positions 123 to 136 (IAELLDGLEDAEKR) are enriched in acidic residues.

This is an uncharacterized protein from Homo sapiens (Human).